Consider the following 660-residue polypeptide: DNA polymerase alpha-associated DNA helicase A (660 aa).

232–239 (GPPGTGKT) is an ATP binding site.

It belongs to the DNA2/NAM7 helicase family. In terms of assembly, associates with the hexameric DNA polymerase alpha.

It is found in the cytoplasm. It localises to the nucleus. The enzyme catalyses ATP + H2O = ADP + phosphate + H(+). In terms of biological role, DNA polymerase alpha-associated DNA helicase which may be involved in DNA replication. This is DNA polymerase alpha-associated DNA helicase A (hcs1) from Schizosaccharomyces pombe (strain 972 / ATCC 24843) (Fission yeast).